The following is a 276-amino-acid chain: E3 ubiquitin-protein ligase CCNB1IP1 (276 aa).

Residues 10 to 52 (CNYRKCRIKLSGYAWVTACSHIFCDQHGSGEFSRSPAICPACN) form an RING-type; atypical zinc finger. Residues 146-182 (MKKVLEEYKKKFSDISEKLMERNRQYQKLQGLYDSLR) adopt a coiled-coil conformation.

Interacts with CCNB1, UBE2L3 and NF2. Post-translationally, ubiquitinated; autoubiquitinated. In terms of processing, phosphorylated by CDK1 on serine or threonine residues (in vitro). Expressed predominantly in the testes and 17 day embryos (corresponding to prophase I in females). Weakly or not expressed in other tissues.

It localises to the nucleus. The protein resides in the chromosome. It catalyses the reaction S-ubiquitinyl-[E2 ubiquitin-conjugating enzyme]-L-cysteine + [acceptor protein]-L-lysine = [E2 ubiquitin-conjugating enzyme]-L-cysteine + N(6)-ubiquitinyl-[acceptor protein]-L-lysine.. It participates in protein modification; protein ubiquitination. In terms of biological role, ubiquitin E3 ligase that acts as a limiting factor for crossing-over during meiosis: required during zygonema to limit the colocalization of RNF212 with MutS-gamma-associated recombination sites and thereby establish early differentiation of crossover and non-crossover sites. Later, it is directed by MutL-gamma to stably accumulate at designated crossover sites. Probably promotes the dissociation of RNF212 and MutS-gamma to allow the progression of recombination and the implementation of the final steps of crossing over. Modulates cyclin-B levels and participates in the regulation of cell cycle progression through the G2 phase. Overexpression causes delayed entry into mitosis. The sequence is that of E3 ubiquitin-protein ligase CCNB1IP1 (Ccnb1ip1) from Mus musculus (Mouse).